A 451-amino-acid polypeptide reads, in one-letter code: MLKYFGTDGVRGVANAGLTPEMAFKLGRDGGYVLTKDKKDGERAKVLVSRDTRISGQMLEYALISGLLSVGIEVLEVGVITTPGLSYLVRAQGADAGVQISASHNPVEDNGIKFFGSDGLKLSDAKEEEIEKLIDAPEDKLPRPSAEGLGTVTNYHEGASKYLQFIENTLPEELGGIKVVVDGANGAASALISRLFADMGVDFTTIATHPNGLNINDHVGATHTKKLQEEVVKQGAQLGLAFDGDADRCIAVDENGNEVDGDHIMYVIGSYLADHGRLKKDTIVTTVMSNLGFTKALERRGLKNVRTQVGDRYVSEEMRANGYNLGGEQSGHVIISDYHNTGDGMLTGLHLLYVMKDTGKSLSELLSDFKEYPQRLINVPVKDKKDWKEHKRITEAIKKVEEELSDEGRIFVRPSGTQSLLRVMTEAPTQELADKYCEEVAKVVEEEMGSK.

Ser103 acts as the Phosphoserine intermediate in catalysis. Mg(2+) contacts are provided by Ser103, Asp243, Asp245, and Asp247. A Phosphoserine modification is found at Ser103.

The protein belongs to the phosphohexose mutase family. Mg(2+) serves as cofactor. In terms of processing, activated by phosphorylation.

It catalyses the reaction alpha-D-glucosamine 1-phosphate = D-glucosamine 6-phosphate. Catalyzes the conversion of glucosamine-6-phosphate to glucosamine-1-phosphate. The chain is Phosphoglucosamine mutase from Lactobacillus gasseri (strain ATCC 33323 / DSM 20243 / BCRC 14619 / CIP 102991 / JCM 1131 / KCTC 3163 / NCIMB 11718 / NCTC 13722 / AM63).